The sequence spans 214 residues: Uridine kinase (214 aa).

ATP is bound at residue G15–S22.

It belongs to the uridine kinase family.

It localises to the cytoplasm. The catalysed reaction is uridine + ATP = UMP + ADP + H(+). It carries out the reaction cytidine + ATP = CMP + ADP + H(+). Its pathway is pyrimidine metabolism; CTP biosynthesis via salvage pathway; CTP from cytidine: step 1/3. It participates in pyrimidine metabolism; UMP biosynthesis via salvage pathway; UMP from uridine: step 1/1. In Aeromonas salmonicida (strain A449), this protein is Uridine kinase.